We begin with the raw amino-acid sequence, 524 residues long: Probable inorganic phosphate transporter 1-2 (524 aa).

The Cytoplasmic segment spans residues 1 to 24; sequence MAEQQLGVLKALDVAKTQLYHFTA. A helical membrane pass occupies residues 25-45; the sequence is IVIAGMGFFTDAYDLFCVSLV. At 46 to 70 the chain is on the extracellular side; that stretch reads TKLLGRIYYFNPESAKPGSLPPHVA. Residues 71–91 form a helical membrane-spanning segment; sequence AAVNGVALCGTLSGQLFFGWL. Residues 92-99 lie on the Cytoplasmic side of the membrane; sequence GDKLGRKK. Residues 100 to 120 form a helical membrane-spanning segment; it reads VYGLTLIMMILCSVASGLSFG. Over 121–131 the chain is Extracellular; the sequence is NEAKGVMTTLC. The chain crosses the membrane as a helical span at residues 132-152; sequence FFRFWLGFGIGGDYPLSATIM. The Cytoplasmic segment spans residues 153 to 161; that stretch reads SEYANKKTR. The helical transmembrane segment at 162–182 threads the bilayer; the sequence is GAFIAAVFAMQGVGILAGGFV. The Extracellular portion of the chain corresponds to 183 to 211; that stretch reads ALAVSSIFDKKFPAPTYAVNRALSTPPQV. The helical transmembrane segment at 212–232 threads the bilayer; that stretch reads DYIWRIIVMFGALPAALTYYW. At 233–292 the chain is on the cytoplasmic side; it reads RMKMPETARYTALVAKNIKQATADMSKVLQTDIELEERVEDDVKDPRQNYGLFSKEFLRR. Residues 293 to 313 traverse the membrane as a helical segment; it reads HGLHLLGTTSTWFLLDIAFYS. Residues 314-348 are Extracellular-facing; sequence QNLFQKDIFSAIGWIPKAATMNATHEVFRIARAQT. A helical membrane pass occupies residues 349-369; sequence LIALCSTVPGYWFTVAFIDTI. Over 370 to 371 the chain is Cytoplasmic; it reads GR. A helical membrane pass occupies residues 372 to 392; sequence FKIQLNGFFMMTVFMFAIAFP. The Extracellular segment spans residues 393-402; that stretch reads YNHWIKPENR. A helical transmembrane segment spans residues 403–423; sequence IGFVVMYSLTFFFANFGPNAT. Over 424–441 the chain is Cytoplasmic; sequence TFIVPAEIFPARLRSTCH. A helical transmembrane segment spans residues 442–462; sequence GISAAAGKAGAIIGAFGFLYA. The Extracellular portion of the chain corresponds to 463 to 484; the sequence is AQNQDKAKVDAGYPPGIGVKNS. A helical membrane pass occupies residues 485–505; the sequence is LIVLGVLNFIGMLFTFLVPEP. Over 506 to 524 the chain is Cytoplasmic; the sequence is KGKSLEELSGEAEVSHDEK.

Belongs to the major facilitator superfamily. Phosphate:H(+) symporter (TC 2.A.1.9) family. As to expression, root specific, especially in trichoblasts. In mature plants, localized in root cortical cells and young lateral roots.

The protein localises to the membrane. Functionally, high-affinity transporter for external inorganic phosphate. The sequence is that of Probable inorganic phosphate transporter 1-2 (PHT1-2) from Arabidopsis thaliana (Mouse-ear cress).